Reading from the N-terminus, the 693-residue chain is Sulfite reductase 1 [ferredoxin], chloroplastic (693 aa).

The transit peptide at 1 to 62 (MTTSFGAAIN…PSSIVRAVST (62 aa)) directs the protein to the chloroplast. [4Fe-4S] cluster contacts are provided by Cys502, Cys508, Cys548, and Cys552. Cys552 serves as a coordination point for siroheme.

It belongs to the nitrite and sulfite reductase 4Fe-4S domain family. Monomer. Interacts with ferredoxin. Siroheme serves as cofactor. It depends on [4Fe-4S] cluster as a cofactor. Post-translationally, phosphorylated; this phosphorylation reduces DNA-binding. Expressed in leaves, stems, roots and petals.

Its subcellular location is the plastid. The protein localises to the chloroplast stroma. The protein resides in the chloroplast nucleoid. It localises to the plastid stroma. It catalyses the reaction hydrogen sulfide + 6 oxidized [2Fe-2S]-[ferredoxin] + 3 H2O = sulfite + 6 reduced [2Fe-2S]-[ferredoxin] + 7 H(+). In terms of biological role, essential protein with sulfite reductase activity required in assimilatory sulfate reduction pathway during both primary and secondary metabolism and thus involved in development and growth. Functionally, DNA-binding protein that binds to both double-stranded and single-stranded DNA without significant sequence specificity to reversibly repress the transcriptional activity of chloroplast nucleoids by promoting DNA compaction and possibly regulate DNA replication. The protein is Sulfite reductase 1 [ferredoxin], chloroplastic (SIR1) of Nicotiana tabacum (Common tobacco).